Reading from the N-terminus, the 428-residue chain is Lupus La protein homolog A (428 aa).

Residues 7 to 99 enclose the HTH La-type RNA-binding domain; it reads KEQKLDSDTK…RRSPAKPLPE (93 aa). The RRM domain maps to 111–203; it reads KSVYIKGFPT…EERKLNKSEE (93 aa). Disordered regions lie at residues 187-223 and 323-428; these read EYHAKKNEERKLNKSEEKAKSKQVKKEAQKQAEDAER and QESF…VGDQ. 2 consecutive short sequence motifs (nuclear localization signal) follow at residues 196–212 and 316–332; these read RKLNKSEEKAKSKQVKK and KKILEGKQESFNKRKGR. Residues 227–349 form the xRRM domain; it reads EERVGSLLKF…KGRGGKGNDS (123 aa). Basic residues-rich tracts occupy residues 328-343 and 352-361; these read KRKGRDGRKFKGKGRG and RKRTQFQGKK. Residues 366–377 are compositionally biased toward acidic residues; it reads SSDDEDDMEESE. The segment covering 406-428 has biased composition (basic and acidic residues); it reads RSLDDKAEDGPAVKQSKTEVGDQ.

In terms of processing, phosphorylated.

The protein resides in the nucleus. In terms of biological role, la protein plays a role in the transcription of RNA polymerase III. It is most probably a transcription termination factor. Binds to the 3' termini of virtually all nascent polymerase III transcripts. The polypeptide is Lupus La protein homolog A (ssb-a) (Xenopus laevis (African clawed frog)).